The primary structure comprises 273 residues: MVKIQVTPDLSIGDGQPFALIGGPCVIESEDFCLKMADQIRQICDRLQISYIFKSSFDKANRTSIDSFRGQSLEDGLQTLQRVKEKIGVPVLTDIHESYQAAIVAEVVDVLQIPAFLCRQTDLLLAAAATGRVINVKKGQFLAPWDMQNVVKKLEQGGAQNILLTERGSSFGYNTLVVDFRSLPQMRALGYPVVFDATHSVQMPGGKGNSSGGQREFVPYLARAAVAVGIDALFMEIHENPEQALSDGPNMVYLSQLEAYLQQLLAIRTALAW.

Belongs to the KdsA family.

It is found in the cytoplasm. The enzyme catalyses D-arabinose 5-phosphate + phosphoenolpyruvate + H2O = 3-deoxy-alpha-D-manno-2-octulosonate-8-phosphate + phosphate. It participates in carbohydrate biosynthesis; 3-deoxy-D-manno-octulosonate biosynthesis; 3-deoxy-D-manno-octulosonate from D-ribulose 5-phosphate: step 2/3. It functions in the pathway bacterial outer membrane biogenesis; lipopolysaccharide biosynthesis. This chain is 2-dehydro-3-deoxyphosphooctonate aldolase, found in Cyanothece sp. (strain PCC 7425 / ATCC 29141).